The primary structure comprises 458 residues: Exodeoxyribonuclease 7 large subunit (458 aa).

Belongs to the XseA family. In terms of assembly, heterooligomer composed of large and small subunits.

Its subcellular location is the cytoplasm. The enzyme catalyses Exonucleolytic cleavage in either 5'- to 3'- or 3'- to 5'-direction to yield nucleoside 5'-phosphates.. Its function is as follows. Bidirectionally degrades single-stranded DNA into large acid-insoluble oligonucleotides, which are then degraded further into small acid-soluble oligonucleotides. This Shouchella clausii (strain KSM-K16) (Alkalihalobacillus clausii) protein is Exodeoxyribonuclease 7 large subunit.